We begin with the raw amino-acid sequence, 803 residues long: Urocanate reductase (803 aa).

Ser-258 carries the FMN phosphoryl serine modification. The FAD site is built by Ala-311, Glu-330, Asn-338, Thr-339, Gly-343, Gly-344, and Asp-573. The active-site Proton donor is Arg-632. FAD-binding residues include His-739, Glu-768, Ala-783, and Leu-784.

Belongs to the FAD-dependent oxidoreductase 2 family. FRD/SDH subfamily. FAD serves as cofactor. It depends on FMN as a cofactor.

It catalyses the reaction dihydrourocanate + A = urocanate + AH2. In terms of biological role, catalyzes the two-electron reduction of urocanate to dihydrourocanate (also named imidazole propionate or deamino-histidine). Dihydrourocanate is present at higher concentrations in subjects with type 2 diabetes, and directly impairs glucose tolerance and insulin signaling at the level of insulin receptor substrate (IRS) through activation of p38 gamma (MAPK12)-p62-mTORC1. Therefore, the UrdA enzyme from the gut bacteria S.mutans strain UA159 may contribute to the pathogenesis of type 2 diabetes by producing the microbial metabolite dihydrourocanate. The protein is Urocanate reductase of Streptococcus mutans serotype c (strain ATCC 700610 / UA159).